A 960-amino-acid polypeptide reads, in one-letter code: Leucine-rich repeat receptor-like serine/threonine-protein kinase SKM1 (960 aa).

The signal sequence occupies residues 1–29 (MSTSHHHHHPPYLITTLFFLFLNFSCLHA). The Extracellular portion of the chain corresponds to 30-634 (NELELLLSFK…VRKRSTKSWW (605 aa)). Cysteines 61 and 68 form a disulfide. N-linked (GlcNAc...) asparagine glycans are attached at residues asparagine 70, asparagine 83, asparagine 103, asparagine 108, asparagine 129, and asparagine 134. 22 LRR repeats span residues 71-96 (ISRV…TFRL), 97-120 (PFLQ…IFTT), 122-146 (SPSL…FLPN), 149-168 (TLDL…IGVF), 169-194 (SNLR…NLSR), 196-216 (EFLT…LGKM), 217-240 (KNLK…IGGL), 241-264 (SSLN…LGDL), 265-288 (KKLE…IFSL), 290-312 (NLIS…VAQM), 313-336 (QSLE…VTSL), 338-360 (RLKV…LGKH), 361-384 (NNLT…LCDS), 386-408 (HLTK…LGMC), 409-432 (QSLE…FTKL), 434-454 (LVNF…TWDM), 455-477 (PQLE…FSRS), 478-501 (KRLK…LMTF), 503-525 (EIMD…LSSC), 526-549 (KNLV…FAEF), 550-573 (QVLS…LGNI), and 575-598 (SLVQ…AFLA). The N-linked (GlcNAc...) asparagine glycan is linked to asparagine 191. The short motif at 221–226 (WIYLGY) is the CLE45 peptide binding element. Residues asparagine 228 and asparagine 252 are each glycosylated (N-linked (GlcNAc...) asparagine). Asparagine 324 carries an N-linked (GlcNAc...) asparagine glycan. 2 N-linked (GlcNAc...) asparagine glycosylation sites follow: asparagine 362 and asparagine 372. An N-linked (GlcNAc...) asparagine glycan is attached at asparagine 537. 2 N-linked (GlcNAc...) asparagine glycosylation sites follow: asparagine 580 and asparagine 600. The helical transmembrane segment at 635–655 (LIITSTFAAFLAVLVSGFFIV) threads the bilayer. At 656–960 (LVFQRTHNVL…TYLSKILSLA (305 aa)) the chain is on the cytoplasmic side. The Protein kinase domain maps to 691 to 953 (FTVNTILSSL…SSSSSCTTYL (263 aa)). Position 692 is a phosphothreonine (threonine 692). Residues 697–705 (LSSLKDQNV) and lysine 717 contribute to the ATP site. Tyrosine 834 carries the post-translational modification Phosphotyrosine.

It belongs to the protein kinase superfamily. Ser/Thr protein kinase family. In terms of assembly, self-interacts. Binds to CLE45 present in the pistil, particularly under relatively high temperature (at 30 degrees Celsius). Expressed in pollen grains and roots vascular tissues. Present in roots.

Its subcellular location is the cell membrane. It carries out the reaction L-seryl-[protein] + ATP = O-phospho-L-seryl-[protein] + ADP + H(+). The catalysed reaction is L-threonyl-[protein] + ATP = O-phospho-L-threonyl-[protein] + ADP + H(+). Receptor with a serine/threonine-protein kinase activity. Together with SKM2, LRR-rich receptor-like kinase (LRR-RLK) required for male fertility by the perception of CLE43 and CLE45 peptides and the transduction of their promoting action in pollen tubes, especially under relatively high temperature (at 30 degrees Celsius), thus conferring tolerance against high temperature probably through the maintenance of mitochondrial activity. Seems to not be involved in the perception of CLE45 peptide in roots. The polypeptide is Leucine-rich repeat receptor-like serine/threonine-protein kinase SKM1 (Arabidopsis thaliana (Mouse-ear cress)).